A 226-amino-acid polypeptide reads, in one-letter code: Uracil-DNA glycosylase (226 aa).

Catalysis depends on Asp-64, which acts as the Proton acceptor.

It belongs to the uracil-DNA glycosylase (UDG) superfamily. UNG family.

It is found in the cytoplasm. It carries out the reaction Hydrolyzes single-stranded DNA or mismatched double-stranded DNA and polynucleotides, releasing free uracil.. Its function is as follows. Excises uracil residues from the DNA which can arise as a result of misincorporation of dUMP residues by DNA polymerase or due to deamination of cytosine. This chain is Uracil-DNA glycosylase, found in Vibrio parahaemolyticus serotype O3:K6 (strain RIMD 2210633).